A 218-amino-acid polypeptide reads, in one-letter code: MVGIIGRKLGMTTVFDETGNAIAVTVVEAGPCTVMQVRDNEKDGYNAIQLGYGAVKEKHLKKPQIGQFKKANLEPKKYLKEFRLDDSSAYTVGQELKVDIFQAGDFIDVSSLSKGRGFAGVMKRHNYDGGPMSHGSNFRRRAGSIGCNSYPARVWKGKGMPGHMGNTLTTIQNLKVVEIRPEDNLIMIKGSIPGAINGIVKITQAAKKKNKKKNSMTK.

It belongs to the universal ribosomal protein uL3 family. As to quaternary structure, part of the 50S ribosomal subunit. Forms a cluster with proteins L14 and L19.

Its function is as follows. One of the primary rRNA binding proteins, it binds directly near the 3'-end of the 23S rRNA, where it nucleates assembly of the 50S subunit. The sequence is that of Large ribosomal subunit protein uL3 from Brachyspira pilosicoli (Serpulina pilosicoli).